Consider the following 200-residue polypeptide: NADH-quinone oxidoreductase subunit B 2 (200 aa).

4 residues coordinate [4Fe-4S] cluster: Cys-79, Cys-80, Cys-144, and Cys-174.

It belongs to the complex I 20 kDa subunit family. As to quaternary structure, NDH-1 is composed of 14 different subunits. Subunits NuoB, C, D, E, F, and G constitute the peripheral sector of the complex. [4Fe-4S] cluster is required as a cofactor.

The protein localises to the cell inner membrane. The catalysed reaction is a quinone + NADH + 5 H(+)(in) = a quinol + NAD(+) + 4 H(+)(out). Functionally, NDH-1 shuttles electrons from NADH, via FMN and iron-sulfur (Fe-S) centers, to quinones in the respiratory chain. The immediate electron acceptor for the enzyme in this species is believed to be ubiquinone. Couples the redox reaction to proton translocation (for every two electrons transferred, four hydrogen ions are translocated across the cytoplasmic membrane), and thus conserves the redox energy in a proton gradient. This chain is NADH-quinone oxidoreductase subunit B 2, found in Rhodopseudomonas palustris (strain BisA53).